Here is a 550-residue protein sequence, read N- to C-terminus: Hydroxylamine reductase (550 aa).

Residues C4, C7, C19, and C26 each coordinate [2Fe-2S] cluster. Residues H249, E273, C317, C405, C433, C458, E492, and K494 each contribute to the hybrid [4Fe-2O-2S] cluster site. The residue at position 405 (C405) is a Cysteine persulfide.

This sequence belongs to the HCP family. The cofactor is [2Fe-2S] cluster. Requires hybrid [4Fe-2O-2S] cluster as cofactor.

The protein localises to the cytoplasm. It catalyses the reaction A + NH4(+) + H2O = hydroxylamine + AH2 + H(+). Its function is as follows. Catalyzes the reduction of hydroxylamine to form NH(3) and H(2)O. The protein is Hydroxylamine reductase of Aeromonas salmonicida (strain A449).